The chain runs to 183 residues: Glutathione-regulated potassium-efflux system ancillary protein KefG (183 aa).

Belongs to the NAD(P)H dehydrogenase (quinone) family. KefG subfamily. In terms of assembly, interacts with KefB.

It is found in the cell inner membrane. The enzyme catalyses a quinone + NADH + H(+) = a quinol + NAD(+). It catalyses the reaction a quinone + NADPH + H(+) = a quinol + NADP(+). Regulatory subunit of a potassium efflux system that confers protection against electrophiles. Required for full activity of KefB. This is Glutathione-regulated potassium-efflux system ancillary protein KefG from Pectobacterium atrosepticum (strain SCRI 1043 / ATCC BAA-672) (Erwinia carotovora subsp. atroseptica).